A 290-amino-acid chain; its full sequence is D-tagatose-1,6-bisphosphate aldolase subunit KbaY (290 aa).

Asp82 acts as the Proton donor in catalysis. His83 and His180 together coordinate Zn(2+). Position 181 (Gly181) interacts with dihydroxyacetone phosphate. His208 serves as a coordination point for Zn(2+). Dihydroxyacetone phosphate-binding positions include Gly209–Ser211 and Asn230–Thr233.

It belongs to the class II fructose-bisphosphate aldolase family. TagBP aldolase KbaY subfamily. As to quaternary structure, homotetramer. Forms a complex with KbaZ. Requires Zn(2+) as cofactor.

The catalysed reaction is D-tagatofuranose 1,6-bisphosphate = D-glyceraldehyde 3-phosphate + dihydroxyacetone phosphate. It functions in the pathway carbohydrate metabolism; D-tagatose 6-phosphate degradation; D-glyceraldehyde 3-phosphate and glycerone phosphate from D-tagatose 6-phosphate: step 2/2. In terms of biological role, catalytic subunit of the tagatose-1,6-bisphosphate aldolase KbaYZ, which catalyzes the reversible aldol condensation of dihydroxyacetone phosphate (DHAP or glycerone-phosphate) with glyceraldehyde 3-phosphate (G3P) to produce tagatose 1,6-bisphosphate (TBP). Requires KbaZ subunit for full activity and stability. The sequence is that of D-tagatose-1,6-bisphosphate aldolase subunit KbaY from Citrobacter koseri (strain ATCC BAA-895 / CDC 4225-83 / SGSC4696).